A 246-amino-acid polypeptide reads, in one-letter code: Caffeoyl-CoA O-methyltransferase 1 (246 aa).

K21 lines the substrate pocket. Residues T63, E85, 87–88, S93, D111, and A140 each bind S-adenosyl-L-methionine; that span reads GV. D162 contacts substrate. An a divalent metal cation-binding site is contributed by D162. D164 contacts S-adenosyl-L-methionine. A divalent metal cation contacts are provided by D188 and N189. N193 is a substrate binding site.

Belongs to the class I-like SAM-binding methyltransferase superfamily. Cation-dependent O-methyltransferase family. CCoAMT subfamily. A divalent metal cation serves as cofactor.

The enzyme catalyses (E)-caffeoyl-CoA + S-adenosyl-L-methionine = (E)-feruloyl-CoA + S-adenosyl-L-homocysteine + H(+). It participates in aromatic compound metabolism; phenylpropanoid biosynthesis. Functionally, methylates caffeoyl-CoA to feruloyl-CoA and 5-hydroxyferuloyl-CoA to sinapoyl-CoA. Plays a role in the synthesis of feruloylated polysaccharides. Involved in the reinforcement of the plant cell wall. Also involved in the responding to wounding or pathogen challenge by the increased formation of cell wall-bound ferulic acid polymers. This Eucalyptus globulus (Tasmanian blue gum) protein is Caffeoyl-CoA O-methyltransferase 1 (CCOMT).